The primary structure comprises 155 residues: Interleukin-2 (155 aa).

The signal sequence occupies residues 1-20 (MYKIQLLSCIALTLALVANG). O-linked (GalNAc...) threonine glycosylation is present at T23. Residues C79 and C127 are joined by a disulfide bond.

Belongs to the IL-2 family.

Its subcellular location is the secreted. In terms of biological role, cytokine produced by activated CD4-positive helper T-cells and to a lesser extend activated CD8-positive T-cells and natural killer (NK) cells that plays pivotal roles in the immune response and tolerance. Binds to a receptor complex composed of either the high-affinity trimeric IL-2R (IL2RA/CD25, IL2RB/CD122 and IL2RG/CD132) or the low-affinity dimeric IL-2R (IL2RB and IL2RG). Interaction with the receptor leads to oligomerization and conformation changes in the IL-2R subunits resulting in downstream signaling starting with phosphorylation of JAK1 and JAK3. In turn, JAK1 and JAK3 phosphorylate the receptor to form a docking site leading to the phosphorylation of several substrates including STAT5. This process leads to activation of several pathways including STAT, phosphoinositide-3-kinase/PI3K and mitogen-activated protein kinase/MAPK pathways. Functions as a T-cell growth factor and can increase NK-cell cytolytic activity as well. Promotes strong proliferation of activated B-cells and subsequently immunoglobulin production. Plays a pivotal role in regulating the adaptive immune system by controlling the survival and proliferation of regulatory T-cells, which are required for the maintenance of immune tolerance. Moreover, participates in the differentiation and homeostasis of effector T-cell subsets, including Th1, Th2, Th17 as well as memory CD8-positive T-cells. This is Interleukin-2 (IL2) from Bos taurus (Bovine).